A 300-amino-acid polypeptide reads, in one-letter code: MKRNKIVFIFGPTAVGKSELLLNFPKGVAEIINVDSVQVYKEFDIASCKPSIELRAHVKHHLVDFLEPIEEYNLGIFYKEACEIIENLRVQKKLPVFVGGSAFYFKHLKYGLPSTPPVSSEIRLHINSLFTTRGKNYLLEELKRVDFERYESISKNDIYRIKRSLEVYYQTGIPISQFLKRGQMLANVLAIGLRRPMEEMRSRIISRVKNMIDCGLLEEIKSLLGKGYNETTPAFKGIGYREFLLWKSRPYSMLNDIINLIVKNSFLYVKRQMTFFDKIPNVLWFHPDDDLKDILDLIFV.

11-18 (GPTAVGKS) is a binding site for ATP. 13-18 (TAVGKS) serves as a coordination point for substrate. Positions 35–38 (DSVQ) are interaction with substrate tRNA.

This sequence belongs to the IPP transferase family. As to quaternary structure, monomer. Mg(2+) is required as a cofactor.

It catalyses the reaction adenosine(37) in tRNA + dimethylallyl diphosphate = N(6)-dimethylallyladenosine(37) in tRNA + diphosphate. Functionally, catalyzes the transfer of a dimethylallyl group onto the adenine at position 37 in tRNAs that read codons beginning with uridine, leading to the formation of N6-(dimethylallyl)adenosine (i(6)A). This is tRNA dimethylallyltransferase from Borrelia hermsii (strain HS1 / DAH).